A 452-amino-acid chain; its full sequence is UDP-N-acetylmuramoyl-tripeptide--D-alanyl-D-alanine ligase (452 aa).

107–113 (GSSGKTS) is a binding site for ATP.

This sequence belongs to the MurCDEF family. MurF subfamily. In terms of assembly, monomer.

It localises to the cytoplasm. It carries out the reaction D-alanyl-D-alanine + UDP-N-acetyl-alpha-D-muramoyl-L-alanyl-gamma-D-glutamyl-meso-2,6-diaminopimelate + ATP = UDP-N-acetyl-alpha-D-muramoyl-L-alanyl-gamma-D-glutamyl-meso-2,6-diaminopimeloyl-D-alanyl-D-alanine + ADP + phosphate + H(+). It participates in cell wall biogenesis; peptidoglycan biosynthesis. Its function is as follows. Involved in cell wall formation. Catalyzes the final step in the synthesis of UDP-N-acetylmuramoyl-pentapeptide, the precursor of murein. This is UDP-N-acetylmuramoyl-tripeptide--D-alanyl-D-alanine ligase from Escherichia coli (strain K12).